Consider the following 119-residue polypeptide: Holo-[acyl-carrier-protein] synthase (119 aa).

Asp8 and Glu58 together coordinate Mg(2+).

Belongs to the P-Pant transferase superfamily. AcpS family. Requires Mg(2+) as cofactor.

It localises to the cytoplasm. The catalysed reaction is apo-[ACP] + CoA = holo-[ACP] + adenosine 3',5'-bisphosphate + H(+). In terms of biological role, transfers the 4'-phosphopantetheine moiety from coenzyme A to a Ser of acyl-carrier-protein. This Limosilactobacillus fermentum (strain NBRC 3956 / LMG 18251) (Lactobacillus fermentum) protein is Holo-[acyl-carrier-protein] synthase.